The sequence spans 1027 residues: MLKIFEKIFGSKHDKDIKKIQPVIQRINELQLSFQSLSDDGLKEMGLQLRSTARGALRPLEEKKQELLSKLSTPDIPLEEADRINDELDTLSEEYEKATVSVLEEILPDTFALVKDTCRRLKGHVYTVMGHDMTWDMVPYDVQLIGGMVLHSGRISEMATGEGKTLVSTLPIFLNALTGRGVHVVTVNDYLAQRDKEWMTPVFEYHGLSVGVILNTMHPFERREQYRCDITYGTNNEFGFDYLRDNMAGSVEEMVQRDFYFAIVDEVDSVLIDEARTPLIISGPVPNADNSKFQEIKPWIDQLVRNQQQLVASYLTDAEKILKTKPGDFDAGLALLRVKRGQPKNSRFIKMLSQQGLAKLVQGTENEFLKDNASRMHEVDDELFYAVDEKAGTIDLTDKGRDFLSRLSHQDSDIFLLPDVGSEIAIIESNASLSAAEKVKQKDAVYRLFADRSERLHNISQLLKAFSLFERDDEYVVQDGKVMIVDEFTGRILPGRRYSDGLHQAIEAKENVRIEGETQTMATITIQNFFRLYKKLAGMTGTAETEASEFYEIYKLDVVVIPTNRPIVRKDMDDLVYKTRREKYNAVVEKVEELQKKGQPVLVGTASVEVSETLSRMLRGKRIAHSVLNAKQHDREAEIVAAAGQKGAVTIATNMAGRGTDIKLGSGVRELGGLFILGSERHESRRIDRQLRGRAGRQGDPGESVFFVSLEDELMRLFGSERVISVMDRLGHEEGDVIEHTMITKSIERAQKKVEEQNFAIRKRLLEYDDVLNQQRDVIYTRRKNGLQKERLTSDIFDLLRDYCDMVVKKYEKAFDPEELEERLLRELSVEFRPESGLFDREGAKGIADKLYETALAFYSRKEKEIPEEIMGQIEKYAVLSVIDKKWREHLREIDSLREGINLRAYGQKDPLLEYKQEAFRLFVVLLQEIELETLSLAFKLFPVNPDEAREIEARQKKEALRQEKLVAQHQAAESIYQHIEESGTSNADNAGDNGPQTVIAEKKPGRNDLCPCGSGKKYKNCHGQQP.

Residues Gln-143, 161 to 165, and Asp-661 contribute to the ATP site; that span reads GEGKT. The segment at 981–1027 is disordered; sequence EESGTSNADNAGDNGPQTVIAEKKPGRNDLCPCGSGKKYKNCHGQQP. Residues Cys-1011, Cys-1013, Cys-1022, and His-1023 each coordinate Zn(2+).

This sequence belongs to the SecA family. In terms of assembly, monomer and homodimer. Part of the essential Sec protein translocation apparatus which comprises SecA, SecYEG and auxiliary proteins SecDF. Other proteins may also be involved. The cofactor is Zn(2+).

It is found in the cell inner membrane. It localises to the cytoplasm. It carries out the reaction ATP + H2O + cellular proteinSide 1 = ADP + phosphate + cellular proteinSide 2.. Its function is as follows. Part of the Sec protein translocase complex. Interacts with the SecYEG preprotein conducting channel. Has a central role in coupling the hydrolysis of ATP to the transfer of proteins into and across the cell membrane, serving as an ATP-driven molecular motor driving the stepwise translocation of polypeptide chains across the membrane. The polypeptide is Protein translocase subunit SecA (Chlorobium limicola (strain DSM 245 / NBRC 103803 / 6330)).